A 464-amino-acid polypeptide reads, in one-letter code: Zinc transporter 6 (464 aa).

Topologically, residues 1 to 33 (MGTIYLFRKTQRSLLGKLTQEFRLVTADRRSWK) are cytoplasmic. The helical transmembrane segment at 34 to 54 (ILLFGAINVVCTGFLLTWCSS) threads the bilayer. Residues 55-64 (TNSMALTAYT) are Extracellular-facing. A helical transmembrane segment spans residues 65–85 (YLTIFDLFSLITCLISYWVMM). Over 86–98 (KKPSPTYSFGFER) the chain is Cytoplasmic. The helical transmembrane segment at 99-119 (FEVLSVFASTVLAQLGALFIL) threads the bilayer. Residues 120 to 134 (KESAERFVEQPEIHT) lie on the Extracellular side of the membrane. Residues 135–155 (GRLLVGTFVALCFNLFSMLSI) traverse the membrane as a helical segment. The Cytoplasmic segment spans residues 156–200 (RNKPFAYVSEAASTSWLQEHVADLSRSLCGIIPGLSSIFLPRMNP). The chain crosses the membrane as a helical span at residues 201-221 (FVLIDIAGALALCITYMLIEI). Over 222-228 (NNYFAVD) the chain is Extracellular. A helical transmembrane segment spans residues 229 to 249 (TASAIAIAVMTFGTMYPMSVY). Topologically, residues 250 to 464 (SGKVLLQTTP…TPGQFTQFKQ (215 aa)) are cytoplasmic.

The protein belongs to the cation diffusion facilitator (CDF) transporter (TC 2.A.4) family. SLC30A subfamily. Heterodimer with SLC30A5; form a functional zinc ion transmembrane transporter.

The protein resides in the golgi apparatus. The protein localises to the trans-Golgi network membrane. Its function is as follows. Has probably no intrinsic transporter activity but together with SLC30A5 forms a functional zinc ion:proton antiporter heterodimer, mediating zinc entry into the lumen of organelles along the secretory pathway. As part of that zinc ion:proton antiporter, contributes to zinc ion homeostasis within the early secretory pathway and regulates the activation and folding of enzymes like alkaline phosphatases and enzymes involved in phosphatidylinositol glycan anchor biosynthesis. This chain is Zinc transporter 6 (slc30a6), found in Xenopus tropicalis (Western clawed frog).